A 161-amino-acid chain; its full sequence is Globin CTT-VIIB-6 (161 aa).

The N-terminal stretch at 1 to 16 (MKFFAVLALCIVGAIA) is a signal peptide. The Globin domain occupies 18–161 (PLTADEASLV…NTFAIVVPRL (144 aa)). Residues H76 and H111 each contribute to the heme b site.

This sequence belongs to the globin family. In terms of assembly, homodimer.

This is Globin CTT-VIIB-6 (CTT-7B6) from Chironomus thummi thummi (Midge).